Consider the following 123-residue polypeptide: Homeobox protein CDX-1 (123 aa).

The segment at residues 5-64 is a DNA-binding region (homeobox); the sequence is KDKYRVVYTDHQRLELEKEFHYSRYITIRRKSELAANLGLTERQVKIWFQNRRAKERKVN. The interval 8-29 is interaction with DNA; that stretch reads YRVVYTDHQRLELEKEFHYSRY. The interval 47–58 is interaction with 5-mCpG DNA; it reads RQVKIWFQNRRA. Residues 57 to 68 are compositionally biased toward basic residues; sequence RAKERKVNKKKQ. Residues 57-123 are disordered; the sequence is RAKERKVNKK…PVPVKEEFLP (67 aa).

This sequence belongs to the Caudal homeobox family. Intestinal epithelium.

It is found in the nucleus. Its function is as follows. Plays a role in transcriptional regulation. Involved in activated KRAS-mediated transcriptional activation of PRKD1 in colorectal cancer (CRC) cells. Binds to the PRKD1 promoter in colorectal cancer (CRC) cells. Could play a role in the terminal differentiation of the intestine. Binds preferentially to methylated DNA. The protein is Homeobox protein CDX-1 (Cdx1) of Rattus norvegicus (Rat).